Consider the following 510-residue polypeptide: GTPase Der (510 aa).

EngA-type G domains are found at residues P3–L166 and I220–T393. Residues G9–S16, D56–I60, N118–D121, G226–S233, D273–V277, and N338–D341 contribute to the GTP site. The region spanning Q394–N478 is the KH-like domain.

Belongs to the TRAFAC class TrmE-Era-EngA-EngB-Septin-like GTPase superfamily. EngA (Der) GTPase family. As to quaternary structure, associates with the 50S ribosomal subunit.

Its function is as follows. GTPase that plays an essential role in the late steps of ribosome biogenesis. The protein is GTPase Der of Haemophilus ducreyi (strain 35000HP / ATCC 700724).